The sequence spans 134 residues: Transmembrane protein 100 (134 aa).

Residues 1-23 (MTEESTKENLGAPKSPTPVTMEK) form a disordered region. Residue serine 15 is modified to Phosphoserine. The next 2 helical transmembrane spans lie at 56–76 (CIIPFAVVVFITGIVVTAVAY) and 84–104 (IISIFGLVLLSSGLFLLASSA). Serine 121 bears the Phosphoserine mark.

In terms of assembly, interacts (via C-terminus) with TRPA1 and TRPV1. Interacts with TASOR. As to expression, expressed in dorsal root ganglia. Expressed in neurons as well as nerve fiber bundles connecting ganglia and fibers innervating muscle layer of the gastric body, jejunum, and proximal colon. Expressed in arterial endothelial cells and neurons of the central nervous system and peripheral nervous system (at protein level). Expressed strongly in lung, weakly in brain, heart and muscle. Expressed in enteric neurons and vascular tissue in the muscularis propria of the gastrointestinal tract.

It localises to the cell membrane. The protein localises to the membrane. The protein resides in the perikaryon. It is found in the cytoplasm. Its subcellular location is the perinuclear region. It localises to the endoplasmic reticulum. In terms of biological role, plays a role during embryonic arterial endothelium differentiation and vascular morphogenesis through the ACVRL1 receptor-dependent signaling pathway upon stimulation by bone morphogenetic proteins, such as GDF2/BMP9 and BMP10. Involved in the regulation of nociception, acting as a modulator of the interaction between TRPA1 and TRPV1, two molecular sensors and mediators of pain signals in dorsal root ganglia (DRG) neurons. Mechanistically, it weakens their interaction, thereby releasing the inhibition of TRPA1 by TRPV1 and increasing the single-channel open probability of the TRPA1-TRPV1 complex. This chain is Transmembrane protein 100 (Tmem100), found in Mus musculus (Mouse).